Consider the following 145-residue polypeptide: Early nodulin-like protein 21 (145 aa).

The N-terminal stretch at 1–17 (MFLWLVIVLTISASVSS) is a signal peptide. A Phytocyanin domain is found at 18–116 (YEHKLNWVVP…GQKMIVEVIS (99 aa)). N-linked (GlcNAc...) asparagine glycans are attached at residues asparagine 30 and asparagine 71. Cysteine 70 and cysteine 104 are disulfide-bonded. Serine 116 carries the GPI-anchor amidated serine lipid modification. A propeptide spans 117 to 145 (RDHTTTSAAPPAAFAVLLCFFSLSLYFVA) (removed in mature form).

It belongs to the early nodulin-like (ENODL) family. As to expression, mostly expressed in leaves and flowers, and, to a lower extent, in roots and stems, but barely in seedlings and seeds.

It is found in the cell membrane. Functionally, may act as a carbohydrate transporter. The sequence is that of Early nodulin-like protein 21 from Arabidopsis thaliana (Mouse-ear cress).